A 366-amino-acid polypeptide reads, in one-letter code: RNA 3'-terminal phosphate cyclase (366 aa).

Residues Gln104, Pro131, Tyr294, Asp297, Gln298, and His320 each contribute to the ATP site. Catalysis depends on His320, which acts as the Tele-AMP-histidine intermediate.

This sequence belongs to the RNA 3'-terminal cyclase family. Type 1 subfamily. Detected in retinal ganglion cells (RGCs) (at protein level).

It is found in the nucleus. The protein localises to the nucleoplasm. The catalysed reaction is a 3'-end 3'-phospho-ribonucleotide-RNA + ATP = a 3'-end 2',3'-cyclophospho-ribonucleotide-RNA + AMP + diphosphate. Catalyzes the conversion of 3'-phosphate to a 2',3'-cyclic phosphodiester at the end of RNA. The mechanism of action of the enzyme occurs in 3 steps: (A) adenylation of the enzyme by ATP; (B) transfer of adenylate to an RNA-N3'P to produce RNA-N3'PP5'A; (C) and attack of the adjacent 2'-hydroxyl on the 3'-phosphorus in the diester linkage to produce the cyclic end product. Likely functions in some aspects of cellular RNA processing. Function plays an important role in regulating axon regeneration by inhibiting central nervous system (CNS) axon regeneration following optic nerve injury. This is RNA 3'-terminal phosphate cyclase from Mus musculus (Mouse).